Consider the following 508-residue polypeptide: T-complex protein 1 subunit beta (508 aa).

This sequence belongs to the TCP-1 chaperonin family. Component of the T-complex protein 1 (TCP1) complex.

It is found in the cytoplasm. Its function is as follows. Molecular chaperone; assists the folding of proteins upon ATP hydrolysis. The polypeptide is T-complex protein 1 subunit beta (CCT2) (Encephalitozoon cuniculi (strain GB-M1) (Microsporidian parasite)).